A 145-amino-acid polypeptide reads, in one-letter code: Bacilliredoxin SH1401 (145 aa).

This sequence belongs to the bacilliredoxin family.

In Staphylococcus haemolyticus (strain JCSC1435), this protein is Bacilliredoxin SH1401.